The following is a 184-amino-acid chain: Transcription termination/antitermination protein NusG (184 aa).

It belongs to the NusG family.

Participates in transcription elongation, termination and antitermination. The protein is Transcription termination/antitermination protein NusG of Borreliella burgdorferi (strain ATCC 35210 / DSM 4680 / CIP 102532 / B31) (Borrelia burgdorferi).